The following is a 320-amino-acid chain: Mycothiol acetyltransferase (320 aa).

N-acetyltransferase domains follow at residues 8–141 (SHLT…RSLR) and 152–320 (LQIR…AALA). Glutamate 36 is a 1D-myo-inositol 2-(L-cysteinylamino)-2-deoxy-alpha-D-glucopyranoside binding site. Acetyl-CoA-binding positions include 80-82 (LVV) and 88-93 (RRGIAT). 1D-myo-inositol 2-(L-cysteinylamino)-2-deoxy-alpha-D-glucopyranoside contacts are provided by glutamate 179, lysine 229, and glutamate 239. Acetyl-CoA contacts are provided by residues 243–245 (LGV) and 250–256 (QGRGLGR). Tyrosine 284 is a binding site for 1D-myo-inositol 2-(L-cysteinylamino)-2-deoxy-alpha-D-glucopyranoside. An acetyl-CoA-binding site is contributed by 289–294 (NIAAVR).

This sequence belongs to the acetyltransferase family. MshD subfamily. In terms of assembly, monomer.

It catalyses the reaction 1D-myo-inositol 2-(L-cysteinylamino)-2-deoxy-alpha-D-glucopyranoside + acetyl-CoA = mycothiol + CoA + H(+). Functionally, catalyzes the transfer of acetyl from acetyl-CoA to desacetylmycothiol (Cys-GlcN-Ins) to form mycothiol. The protein is Mycothiol acetyltransferase of Mycobacterium ulcerans (strain Agy99).